A 116-amino-acid chain; its full sequence is MAGRSGDRDEELLKAVRYIKILYQSNPYPKLEGTRKARRNRRRRWRARQRQIHQISERILSTCLGRLQEPVRLQLPLLEKLHINCSEDCGQGTEKGVGSPQISVESRAVLGSGTKE.

Ser5 is subject to Phosphoserine; by host CK2. The tract at residues Tyr18 to Asn26 is homomultimerization. Positions Thr34 to Arg50 match the Nuclear localization signal and RNA-binding (RRE) motif. A Nuclear export signal and binding to XPO1 motif is present at residues Leu73–Asn84. The segment at Gly90–Glu116 is disordered. At Ser99 the chain carries Phosphoserine; by host.

It belongs to the HIV-1 REV protein family. As to quaternary structure, homomultimer; when bound to the RRE. Multimeric assembly is essential for activity and may involve XPO1. Binds to human KPNB1, XPO1, TNPO1, RANBP5 and IPO7. Interacts with the viral Integrase. Interacts with human KHDRBS1. Interacts with human NAP1; this interaction decreases Rev multimerization and stimulates its activity. Interacts with human DEAD-box helicases DDX3 and DDX24; these interactions may serve for viral RNA export to the cytoplasm and packaging, respectively. Interacts with human PSIP1; this interaction may inhibit HIV-1 DNA integration by promoting dissociation of the Integrase-LEDGF/p75 complex. Asymmetrically arginine dimethylated at one site by host PRMT6. Methylation impairs the RNA-binding activity and export of viral RNA from the nucleus to the cytoplasm. Post-translationally, phosphorylated by protein kinase CK2. Presence of, and maybe binding to the N-terminus of the regulatory beta subunit of CK2 is necessary for CK2-mediated Rev's phosphorylation.

Its subcellular location is the host nucleus. It is found in the host nucleolus. The protein localises to the host cytoplasm. In terms of biological role, escorts unspliced or incompletely spliced viral pre-mRNAs (late transcripts) out of the nucleus of infected cells. These pre-mRNAs carry a recognition sequence called Rev responsive element (RRE) located in the env gene, that is not present in fully spliced viral mRNAs (early transcripts). This function is essential since most viral proteins are translated from unspliced or partially spliced pre-mRNAs which cannot exit the nucleus by the pathway used by fully processed cellular mRNAs. Rev itself is translated from a fully spliced mRNA that readily exits the nucleus. Rev's nuclear localization signal (NLS) binds directly to KPNB1/Importin beta-1 without previous binding to KPNA1/Importin alpha-1. KPNB1 binds to the GDP bound form of RAN (Ran-GDP) and targets Rev to the nucleus. In the nucleus, the conversion from Ran-GDP to Ran-GTP dissociates Rev from KPNB1 and allows Rev's binding to the RRE in viral pre-mRNAs. Rev multimerization on the RRE via cooperative assembly exposes its nuclear export signal (NES) to the surface. Rev can then form a complex with XPO1/CRM1 and Ran-GTP, leading to nuclear export of the complex. Conversion from Ran-GTP to Ran-GDP mediates dissociation of the Rev/RRE/XPO1/RAN complex, so that Rev can return to the nucleus for a subsequent round of export. Beside KPNB1, also seems to interact with TNPO1/Transportin-1, RANBP5/IPO5 and IPO7/RANBP7 for nuclear import. The nucleoporin-like HRB/RIP is an essential cofactor that probably indirectly interacts with Rev to release HIV RNAs from the perinuclear region to the cytoplasm. The polypeptide is Protein Rev (Human immunodeficiency virus type 1 group M subtype F2 (isolate MP257) (HIV-1)).